A 470-amino-acid polypeptide reads, in one-letter code: MASIPHYDYLVIGGGSGGVASARRAASYGAKTLLIEGKALGGTCVNVGCVPKKVMWNASDLAGRIRQAKEYGFPDVDPKYADNFDWSGFKAKRDAYVKRLNGIYERNLQKEGVEYVFGWATLYKQEGQEFPLVHVKSDDGNTKLYSAKKIMIATGGKPRLPDVPGAEYGIDSDGFFALETQPKRVAVVGGGYIGVELAGVFHGLNSETTLFCRGQTVLRAFDIMIQDTITDYYVKEGINVLKGSGVKKIVKKDNGELLVTYEQDGAEKDITLDSLIWTIGREPLKDTLNLGEFGIKTNKRGYIEVDEYQRSSVDNIYSLGDVCGKVELTPMAIAAGRKLSNRLFGPTEFKNQKQDYTDVPSAVFSHPEVGSIGITEAAAKEQYGEENVKVYTSKFVAMYYAMLEEKAPTAYKLVCAGKDEKVVGLHIVGADSAEILQGFGVAIRMGATKADFDNVVAIHPTSAEELVTMR.

Positions 16 and 17 each coordinate FAD. Glutathione is bound at residue Ser-16. Glutathione is bound at residue Arg-23. Glu-36, Thr-43, Cys-44, and Lys-52 together coordinate FAD. Cys-44 and Cys-49 form a disulfide bridge. Tyr-104 contacts glutathione. Ala-120 is a binding site for FAD. The NADP(+) site is built by Gly-190, Ile-193, Glu-196, Arg-213, and Arg-219. Thr-228 is a binding site for glutathione. Gly-280 contacts NADP(+). Asp-321 is an FAD binding site. Glu-327 is a binding site for NADP(+). Residue Thr-329 participates in FAD binding. Residue Arg-337 coordinates glutathione. Position 362 (Ala-362) interacts with NADP(+). Glutathione is bound at residue Lys-412. His-459 is a binding site for FAD. His-459 (proton acceptor) is an active-site residue.

The protein belongs to the class-I pyridine nucleotide-disulfide oxidoreductase family. In terms of assembly, homodimer. FAD serves as cofactor.

The protein localises to the cytoplasm. It localises to the mitochondrion. The catalysed reaction is 2 glutathione + NADP(+) = glutathione disulfide + NADPH + H(+). In terms of biological role, catalyzes the reduction of glutathione disulfide (GSSG) to reduced glutathione (GSH). Constitutes the major mechanism to maintain a high GSH:GSSG ratio in the cytosol. This Yarrowia lipolytica (strain CLIB 122 / E 150) (Yeast) protein is Glutathione reductase (GLR1).